Here is a 284-residue protein sequence, read N- to C-terminus: MFIISGRTMLKKAQQEGYAVPAFNIHNLETLQVVVETAAELRSPLIVAGTPGTFSYAGVGNIVAIAAELAKSWNHPLAVHLDHHEKLADIKMKVAAGVRSVMIDGSHFPFADNIALVKSVVDYCHRYDVSVEAELGRLGGQEDDLIVDGKDALYTHPEQAREFVEKTGIDSLAIAIGTAHGLYTAEPKLDFERLTEIRQRVDVPLVLHGASGLPTRDITRAISLGICKVNVATELKIAFSGALKNYLTQHAEASDPRHYMIPAKAAMKEVVRKVIADCGCDGKL.

The active-site Proton donor is the aspartate 82. Zn(2+) contacts are provided by histidine 83 and histidine 180. Position 181 (glycine 181) interacts with dihydroxyacetone phosphate. Position 208 (histidine 208) interacts with Zn(2+). Dihydroxyacetone phosphate contacts are provided by residues 209 to 211 (GAS) and 230 to 233 (NVAT).

This sequence belongs to the class II fructose-bisphosphate aldolase family. TagBP aldolase GatY subfamily. As to quaternary structure, forms a complex with GatZ. Zn(2+) serves as cofactor.

The catalysed reaction is D-tagatofuranose 1,6-bisphosphate = D-glyceraldehyde 3-phosphate + dihydroxyacetone phosphate. It participates in carbohydrate metabolism; D-tagatose 6-phosphate degradation; D-glyceraldehyde 3-phosphate and glycerone phosphate from D-tagatose 6-phosphate: step 2/2. Catalytic subunit of the tagatose-1,6-bisphosphate aldolase GatYZ, which catalyzes the reversible aldol condensation of dihydroxyacetone phosphate (DHAP or glycerone-phosphate) with glyceraldehyde 3-phosphate (G3P) to produce tagatose 1,6-bisphosphate (TBP). Requires GatZ subunit for full activity and stability. Is involved in the catabolism of galactitol. In Salmonella newport (strain SL254), this protein is D-tagatose-1,6-bisphosphate aldolase subunit GatY.